A 364-amino-acid chain; its full sequence is A-type ATP synthase subunit C (364 aa).

The protein belongs to the V-ATPase V0D/AC39 subunit family. As to quaternary structure, has multiple subunits with at least A(3), B(3), C, D, E, F, H, I and proteolipid K(x).

It localises to the cell membrane. In terms of biological role, component of the A-type ATP synthase that produces ATP from ADP in the presence of a proton gradient across the membrane. In Desulfurococcus sp. (strain SY), this protein is A-type ATP synthase subunit C.